A 321-amino-acid polypeptide reads, in one-letter code: Agamous-like MADS-box protein AGL80 (321 aa).

An MADS-box domain is found at 1–61; that stretch reads MTRKKVKLAY…DTNPEVWPSN (61 aa). Positions 89-114 form a coiled coil; the sequence is FLKQRIAKATETLRRQRKDSRELEMT.

In terms of assembly, interacts with AGL61 and AGL62. Forms a heterodimer with AGL61. Interacts with MEE14/CBP1. In terms of tissue distribution, expressed in the central cell of the female gametophyte and in early endosperm. Also detected in ovaries, young siliques, roots, leaves, stems, young flowers and anthers.

It localises to the nucleus. Its function is as follows. Probable transcription factor. Controls central cell differentiation during female gametophyte development. Required for the expression of DEMETER and DD46, but not for the expression of FIS2. Probable transcription factor that may function in the maintenance of the proper function of the central cell in pollen tube attraction. This is Agamous-like MADS-box protein AGL80 (AGL80) from Arabidopsis thaliana (Mouse-ear cress).